The chain runs to 243 residues: Uridylate kinase (243 aa).

12–15 (KLSG) serves as a coordination point for ATP. G54 lines the UMP pocket. G55 and R59 together coordinate ATP. Position 135 to 142 (135 to 142 (TGNPYFTT)) interacts with UMP. N163, Y169, and D172 together coordinate ATP.

It belongs to the UMP kinase family. In terms of assembly, homohexamer.

It is found in the cytoplasm. It carries out the reaction UMP + ATP = UDP + ADP. It participates in pyrimidine metabolism; CTP biosynthesis via de novo pathway; UDP from UMP (UMPK route): step 1/1. Inhibited by UTP. Functionally, catalyzes the reversible phosphorylation of UMP to UDP. This is Uridylate kinase from Roseiflexus sp. (strain RS-1).